We begin with the raw amino-acid sequence, 1420 residues long: tRNA (32-2'-O)-methyltransferase regulator TRM732 (1420 aa).

The interval 748–754 is required for activity; that stretch reads RRSGGLP.

This sequence belongs to the THADA family. As to quaternary structure, interacts with TRM7; for 2'-O-methylation of position 32 in substrate tRNAs.

The protein resides in the cytoplasm. Its function is as follows. Together with methyltransferase TRM7, methylates the 2'-O-ribose of nucleotides at position 32 of the anticodon loop of substrate tRNAs. The chain is tRNA (32-2'-O)-methyltransferase regulator TRM732 (TRM732) from Saccharomyces cerevisiae (strain ATCC 204508 / S288c) (Baker's yeast).